The chain runs to 348 residues: Lysophosphatidic acid receptor 2 (348 aa).

The Extracellular segment spans residues Met-1–Val-30. 2 N-linked (GlcNAc...) asparagine glycosylation sites follow: Asn-7 and Asn-15. The helical transmembrane segment at Val-31 to Ile-51 threads the bilayer. The Cytoplasmic portion of the chain corresponds to Ala-52–Tyr-66. A helical transmembrane segment spans residues Leu-67 to Phe-87. Topologically, residues His-88–Arg-104 are extracellular. Residues Gln-105–Val-124 form a helical membrane-spanning segment. The Cytoplasmic portion of the chain corresponds to Glu-125–Val-144. Residues Val-145–Phe-165 form a helical membrane-spanning segment. Topologically, residues Trp-166–Ser-185 are extracellular. A helical transmembrane segment spans residues Tyr-186 to Thr-206. Topologically, residues Arg-207–Thr-239 are cytoplasmic. A helical transmembrane segment spans residues Val-240–Leu-260. The Extracellular segment spans residues Asp-261–Val-270. A helical transmembrane segment spans residues Leu-271 to Val-291. Residues Tyr-292–Leu-348 lie on the Cytoplasmic side of the membrane. The S-palmitoyl cysteine moiety is linked to residue Cys-308. The PDZ-binding motif lies at Asp-345–Leu-348.

The protein belongs to the G-protein coupled receptor 1 family. As to quaternary structure, interacts with SLC9A3R2/NHERF2, MAGI3 and PLCB3. Interacts with RALA and GRK2. As to expression, most abundantly expressed in testes, kidney, and embryonic brain. Other organs also express the transcript, including heart, lung, spleen, thymus, stomach, and adult brain. Several have little or no expression, including liver, small intestine, and skeletal muscle.

It localises to the cell surface. Its subcellular location is the cell membrane. Its function is as follows. Receptor for lysophosphatidic acid (LPA), a mediator of diverse cellular activities. Seems to be coupled to the G(i)/G(o), G(12)/G(13), and G(q) families of heteromeric G proteins. Plays a key role in phospholipase C-beta (PLC-beta) signaling pathway Stimulates phospholipase C (PLC) activity in a manner that is independent of RALA activation. In Mus musculus (Mouse), this protein is Lysophosphatidic acid receptor 2.